A 313-amino-acid chain; its full sequence is Putative zinc finger protein 077L (313 aa).

A C3H1-type zinc finger spans residues 174–199 (CFSITKGIECPHYSCTYIHNYSQIEH). Positions 294 to 313 (SDDSDSENNDEDDDWKIDLF) are disordered. Acidic residues predominate over residues 296–313 (DSDSENNDEDDDWKIDLF).

Belongs to the IIV-6 077L family.

This is Putative zinc finger protein 077L from Invertebrate iridescent virus 6 (IIV-6).